The primary structure comprises 91 residues: Large ribosomal subunit protein uL23 (91 aa).

The protein belongs to the universal ribosomal protein uL23 family. Part of the 50S ribosomal subunit. Contacts protein L29, and trigger factor when it is bound to the ribosome.

One of the early assembly proteins it binds 23S rRNA. One of the proteins that surrounds the polypeptide exit tunnel on the outside of the ribosome. Forms the main docking site for trigger factor binding to the ribosome. This chain is Large ribosomal subunit protein uL23, found in Staphylococcus saprophyticus subsp. saprophyticus (strain ATCC 15305 / DSM 20229 / NCIMB 8711 / NCTC 7292 / S-41).